A 267-amino-acid polypeptide reads, in one-letter code: Potassium channel regulatory protein (267 aa).

The BTB domain occupies 5–74 (ELVTLNVGGK…LRTQQLLLPT (70 aa)).

Can form homooligomers. Interacts with KCNA1 (via cytoplasmic N-terminal domain) and KCNA4.

It is found in the endoplasmic reticulum. Functionally, inhibits potassium fluxes in cells. May regulate Kv1 family channel proteins by retaining a fraction of channels in endomembranes. This chain is Potassium channel regulatory protein (KCNRG), found in Bos taurus (Bovine).